A 337-amino-acid chain; its full sequence is Retrovirus-related Pol polyprotein from type-1 retrotransposable element R1 (337 aa).

The 118-residue stretch at glycine 1–methionine 118 folds into the Reverse transcriptase domain. The tract at residues lysine 253–aspartate 337 is nucleic acid-binding endonuclease.

The catalysed reaction is DNA(n) + a 2'-deoxyribonucleoside 5'-triphosphate = DNA(n+1) + diphosphate. The protein is Retrovirus-related Pol polyprotein from type-1 retrotransposable element R1 of Nasonia vitripennis (Parasitic wasp).